The following is a 569-amino-acid chain: MLVNPATKYRPAATVDIPDRTWPGRTITRAPRWMSTDLRDGNQALIEPMNPARKLRLFEQLVKIGLKEIEVAFPAASQTDFDFVRMLIEERRIPDDVTIVVLTQSREDLIRRTVESVRGAARATVHLYNPIAPAWRRIVFNASRDEIKAVAVSGTRLIKALTDAMPETAWTYEYSPETFSLAELDFSLEVSDAVSAAWQAGPGRPMILNLPTTVECSTPNVFADQIEWMHRRLARRAHIVLSVHPHNDRGTAVAAAELALMAGADRVEGCLFGNGERTGNVDLVTLALNLYTQGVAPELDFSDIDAVRQCVEHCNQLPVHPRHPYVGDLVFTAFSGSHQDAIRKGFAQQQPDAIWEVPYLPIDPADLGRSYDAVIRVNSQSGKGGMAYLLEQVHGLYLPRRLQIEFSRAVQAMTDDTGLEASADDLYGLFRREYLARETPLRYVSHQLASDATGATAITVQMERDGQPCTVRGTGNGPIDAFIDALDLPVRVMDYHEHAMTAGADARAACYVEVRVGDSPTGFGAGIDASLVTASLRAVVSGVNRHLQAGFGARAQATQTASASAATEA.

The Pyruvate carboxyltransferase domain occupies 31–305; sequence PRWMSTDLRD…APELDFSDID (275 aa). Mg(2+) is bound by residues D40, H244, H246, and N280. A regulatory domain region spans residues 437–569; it reads RETPLRYVSH…TASASAATEA (133 aa).

This sequence belongs to the alpha-IPM synthase/homocitrate synthase family. LeuA type 2 subfamily. Homodimer. Mg(2+) serves as cofactor.

The protein resides in the cytoplasm. It carries out the reaction 3-methyl-2-oxobutanoate + acetyl-CoA + H2O = (2S)-2-isopropylmalate + CoA + H(+). It functions in the pathway amino-acid biosynthesis; L-leucine biosynthesis; L-leucine from 3-methyl-2-oxobutanoate: step 1/4. Functionally, catalyzes the condensation of the acetyl group of acetyl-CoA with 3-methyl-2-oxobutanoate (2-ketoisovalerate) to form 3-carboxy-3-hydroxy-4-methylpentanoate (2-isopropylmalate). The polypeptide is 2-isopropylmalate synthase (Cupriavidus taiwanensis (strain DSM 17343 / BCRC 17206 / CCUG 44338 / CIP 107171 / LMG 19424 / R1) (Ralstonia taiwanensis (strain LMG 19424))).